The primary structure comprises 1070 residues: DNA-directed RNA polymerase subunit beta (1070 aa).

This sequence belongs to the RNA polymerase beta chain family. In plastids the minimal PEP RNA polymerase catalytic core is composed of four subunits: alpha, beta, beta', and beta''. When a (nuclear-encoded) sigma factor is associated with the core the holoenzyme is formed, which can initiate transcription.

The protein localises to the plastid. Its subcellular location is the chloroplast. The enzyme catalyses RNA(n) + a ribonucleoside 5'-triphosphate = RNA(n+1) + diphosphate. DNA-dependent RNA polymerase catalyzes the transcription of DNA into RNA using the four ribonucleoside triphosphates as substrates. This chain is DNA-directed RNA polymerase subunit beta, found in Cucumis sativus (Cucumber).